Consider the following 314-residue polypeptide: Nucleoprotein (314 aa).

Residue methionine 1 is modified to N-acetylmethionine; by host. Residues tyrosine 38, tyrosine 41, arginine 118, lysine 237, and serine 266 each coordinate RNA.

Belongs to the tenuiviruses nucleocapsid protein family.

It is found in the virion. The protein localises to the host cytoplasm. In terms of biological role, encapsidates the genome, protecting it from nucleases. The encapsidated genomic RNA is termed the nucleocapsid (NC), and serves as template for viral transcription and replication. In Wheat yellow head virus (WYHV), this protein is Nucleoprotein.